A 346-amino-acid polypeptide reads, in one-letter code: tRNA-specific 2-thiouridylase MnmA (346 aa).

6 to 13 is an ATP binding site; it reads AMSGGTDS. The active-site Nucleophile is the cysteine 90. Cysteine 90 and cysteine 187 form a disulfide bridge. Glycine 114 is a binding site for ATP. The tract at residues 137–139 is interaction with tRNA; it reads KDQ. Cysteine 187 acts as the Cysteine persulfide intermediate in catalysis. The interaction with tRNA stretch occupies residues 292–293; it reads RY.

The protein belongs to the MnmA/TRMU family.

It is found in the cytoplasm. It catalyses the reaction S-sulfanyl-L-cysteinyl-[protein] + uridine(34) in tRNA + AH2 + ATP = 2-thiouridine(34) in tRNA + L-cysteinyl-[protein] + A + AMP + diphosphate + H(+). Its function is as follows. Catalyzes the 2-thiolation of uridine at the wobble position (U34) of tRNA, leading to the formation of s(2)U34. The protein is tRNA-specific 2-thiouridylase MnmA of Nitratidesulfovibrio vulgaris (strain ATCC 29579 / DSM 644 / CCUG 34227 / NCIMB 8303 / VKM B-1760 / Hildenborough) (Desulfovibrio vulgaris).